Here is a 290-residue protein sequence, read N- to C-terminus: MSWLDKLLPPKIKQTDPKSRKGIPEGLWVKCPSCEAVLYRNDVDANLHVCPKCDHHMRIGARERLDALLDPEGRYEIGQEIVPVDSLKFKDSRKYPDRLKEAMDETGETDAMVVMGGAIHTLPVVAACFEFSFMGGSMGSVVGERFARGAQNALEQHVPFICFTASGGARMQESLLSLMQMAKTTAMLTKLSEAKLPFISVLTDPTMGGVSASFAFLGDVVIAEPKALIGFAGPRVIEQTVREKLPEGFQRAEFLLKTGAIDMIVDRRKMRDEIAQLLALLQRQPADALA.

In terms of domain architecture, CoA carboxyltransferase N-terminal spans 27–290 (LWVKCPSCEA…LQRQPADALA (264 aa)). Residues Cys31, Cys34, Cys50, and Cys53 each coordinate Zn(2+). The C4-type zinc finger occupies 31-53 (CPSCEAVLYRNDVDANLHVCPKC).

This sequence belongs to the AccD/PCCB family. As to quaternary structure, acetyl-CoA carboxylase is a heterohexamer composed of biotin carboxyl carrier protein (AccB), biotin carboxylase (AccC) and two subunits each of ACCase subunit alpha (AccA) and ACCase subunit beta (AccD). Zn(2+) is required as a cofactor.

The protein localises to the cytoplasm. The catalysed reaction is N(6)-carboxybiotinyl-L-lysyl-[protein] + acetyl-CoA = N(6)-biotinyl-L-lysyl-[protein] + malonyl-CoA. It participates in lipid metabolism; malonyl-CoA biosynthesis; malonyl-CoA from acetyl-CoA: step 1/1. In terms of biological role, component of the acetyl coenzyme A carboxylase (ACC) complex. Biotin carboxylase (BC) catalyzes the carboxylation of biotin on its carrier protein (BCCP) and then the CO(2) group is transferred by the transcarboxylase to acetyl-CoA to form malonyl-CoA. In Burkholderia multivorans (strain ATCC 17616 / 249), this protein is Acetyl-coenzyme A carboxylase carboxyl transferase subunit beta.